Reading from the N-terminus, the 287-residue chain is Probable glucose uptake protein GlcU (287 aa).

The next 9 helical transmembrane spans lie at 7–29 (LIALLPALFWGSVVIINVFVGGG), 34–56 (IRGTTLGTLFIGFSLLATGHAAF), 58–75 (NLTVIIVGLVSGALWAFG), 114–136 (WSTIVQVVMGLIAMILLVVGISL), 156–178 (MGILLLSTIGYVGYVVLGDIFGV), 183–202 (ALFFQSIGMAIGGLILSMNH), 209–228 (TALNLIPGVIWGIGNLFMFY), 233–255 (VGVATSFSLSQLLVIVSTLGGIF), and 267–286 (IGIWSGIIVIVIASIILGNL).

It belongs to the GRP transporter (TC 2.A.7.5) family.

The protein resides in the cell membrane. Its function is as follows. Involved in the uptake of glucose. The protein is Probable glucose uptake protein GlcU (glcU) of Staphylococcus epidermidis (strain ATCC 35984 / DSM 28319 / BCRC 17069 / CCUG 31568 / BM 3577 / RP62A).